Reading from the N-terminus, the 86-residue chain is Protein YwqI (86 aa).

Residues 57–83 (DYKKAVQKNIEDTKDNVDSLKEQDEAI) are a coiled coil.

This is Protein YwqI (ywqI) from Bacillus subtilis (strain 168).